Reading from the N-terminus, the 257-residue chain is Small ribosomal subunit protein uS2 (257 aa).

The protein belongs to the universal ribosomal protein uS2 family.

The polypeptide is Small ribosomal subunit protein uS2 (Ruegeria pomeroyi (strain ATCC 700808 / DSM 15171 / DSS-3) (Silicibacter pomeroyi)).